The sequence spans 461 residues: MTALFQQLPSVDKILKTSQGSQLITEFGHTAVVAICRELLTQARQFIKKNNQLPEYFSNFDRTFVEIHSRLQKQNQVQIKAVHNLTGTVLHTNLGRALWSEAAQQAALSVMQKNVSLEYDLDEGKRSHRDNYISELLCKLTGAEAACIVNNNAAAVLLMLATFAQGKEVIISRGELIEIGGAFRIPDIMEQAGCHLVEVGTTNRTHLKDYRNAITENTAFLMKVHSSNYQICGFTSSVSEEELAELGREMNVPVVTDLGSGALIDLSQYGLPKESTVQEKVAQGVGLVSFSGDKLLGGVQAGIIVGKKEWIEQLQAHPLKRALRCDKVILAGLEATLRLYLNPEKLTEKLPTLYLLTQPLKQLKINAMRLKERLESRLNSQFDIQIEASQAQIGSGSQPMERIPSVAVTIAEKTNVKLSALSARFKQLSQPIIGRMENGKIWLDLRSLAAIETLLNTLDEL.

Residue Lys294 is modified to N6-(pyridoxal phosphate)lysine.

This sequence belongs to the SelA family. It depends on pyridoxal 5'-phosphate as a cofactor.

The protein resides in the cytoplasm. The catalysed reaction is L-seryl-tRNA(Sec) + selenophosphate + H(+) = L-selenocysteinyl-tRNA(Sec) + phosphate. It participates in aminoacyl-tRNA biosynthesis; selenocysteinyl-tRNA(Sec) biosynthesis; selenocysteinyl-tRNA(Sec) from L-seryl-tRNA(Sec) (bacterial route): step 1/1. In terms of biological role, converts seryl-tRNA(Sec) to selenocysteinyl-tRNA(Sec) required for selenoprotein biosynthesis. The polypeptide is L-seryl-tRNA(Sec) selenium transferase (Haemophilus influenzae (strain PittEE)).